Here is a 179-residue protein sequence, read N- to C-terminus: Disulfide bond formation protein B (179 aa).

At 1 to 14 the chain is on the cytoplasmic side; that stretch reads MLSYFKELSLNRTA. The chain crosses the membrane as a helical span at residues 15–31; that stretch reads WLLLAFVAFALEASAIY. Residues 32–49 are Periplasmic-facing; it reads FQYGMGLVPCVMCVYERL. Cys-41 and Cys-44 are oxidised to a cystine. Residues 50–65 traverse the membrane as a helical segment; sequence AIFGLLIAGLVGAISP. Topologically, residues 66-72 are cytoplasmic; the sequence is RFFLTRW. Residues 73 to 90 traverse the membrane as a helical segment; sequence LALLLWGFSAFKGLALAI. At 91–146 the chain is on the periplasmic side; sequence KHHDYQANPSPWNQCEFKPEFPQTMPFDQWFPSIFAPGPVNCSEKQWEMFGLGMPE. An intrachain disulfide couples Cys-105 to Cys-132. Residues 147–165 form a helical membrane-spanning segment; the sequence is WLILAFSIFALMFVIVLLS. Over 166–179 the chain is Cytoplasmic; sequence QFKRAKPQYRSVFR.

This sequence belongs to the DsbB family.

It is found in the cell inner membrane. In terms of biological role, required for disulfide bond formation in some periplasmic proteins. Acts by oxidizing the DsbA protein. This Actinobacillus pleuropneumoniae serotype 5b (strain L20) protein is Disulfide bond formation protein B.